A 107-amino-acid chain; its full sequence is Thiosulfate sulfurtransferase GlpE (107 aa).

The 89-residue stretch at 17-105 (ADDNALLVDI…WRIAFPQQVS (89 aa)) folds into the Rhodanese domain. Cysteine 65 acts as the Cysteine persulfide intermediate in catalysis.

The protein belongs to the GlpE family.

The protein localises to the cytoplasm. It carries out the reaction thiosulfate + hydrogen cyanide = thiocyanate + sulfite + 2 H(+). The catalysed reaction is thiosulfate + [thioredoxin]-dithiol = [thioredoxin]-disulfide + hydrogen sulfide + sulfite + 2 H(+). Functionally, transferase that catalyzes the transfer of sulfur from thiosulfate to thiophilic acceptors such as cyanide or dithiols. May function in a CysM-independent thiosulfate assimilation pathway by catalyzing the conversion of thiosulfate to sulfite, which can then be used for L-cysteine biosynthesis. In Erwinia tasmaniensis (strain DSM 17950 / CFBP 7177 / CIP 109463 / NCPPB 4357 / Et1/99), this protein is Thiosulfate sulfurtransferase GlpE.